The following is a 246-amino-acid chain: 1-(5-phosphoribosyl)-5-[(5-phosphoribosylamino)methylideneamino] imidazole-4-carboxamide isomerase (246 aa).

Catalysis depends on Asp12, which acts as the Proton acceptor. Asp134 acts as the Proton donor in catalysis.

The protein belongs to the HisA/HisF family.

Its subcellular location is the cytoplasm. The catalysed reaction is 1-(5-phospho-beta-D-ribosyl)-5-[(5-phospho-beta-D-ribosylamino)methylideneamino]imidazole-4-carboxamide = 5-[(5-phospho-1-deoxy-D-ribulos-1-ylimino)methylamino]-1-(5-phospho-beta-D-ribosyl)imidazole-4-carboxamide. It functions in the pathway amino-acid biosynthesis; L-histidine biosynthesis; L-histidine from 5-phospho-alpha-D-ribose 1-diphosphate: step 4/9. The protein is 1-(5-phosphoribosyl)-5-[(5-phosphoribosylamino)methylideneamino] imidazole-4-carboxamide isomerase of Haloarcula marismortui (strain ATCC 43049 / DSM 3752 / JCM 8966 / VKM B-1809) (Halobacterium marismortui).